Reading from the N-terminus, the 521-residue chain is Maturase K (521 aa).

Belongs to the intron maturase 2 family. MatK subfamily.

It localises to the plastid. It is found in the chloroplast. In terms of biological role, usually encoded in the trnK tRNA gene intron. Probably assists in splicing its own and other chloroplast group II introns. The chain is Maturase K from Trillium catesbaei (Catesby's trillium).